Consider the following 423-residue polypeptide: COUP transcription factor 1 (423 aa).

A disordered region spans residues 1 to 81 (MAMVVSSWRD…QGPPGSGQSQ (81 aa)). A compositionally biased stretch (low complexity) spans 39–67 (EQQQQAGSGAPHTPQTPGQPGAPATPGTA). The nuclear receptor DNA-binding region spans 83–158 (HIECVVCGDK…VGMRREAVQR (76 aa)). 2 consecutive NR C4-type zinc fingers follow at residues 86 to 106 (CVVC…CEGC) and 122 to 146 (CRAN…LKKC). The region spanning 184–410 (YLSGYISLLL…TLIRDMLLSG (227 aa)) is the NR LBD domain.

Belongs to the nuclear hormone receptor family. NR2 subfamily. Binds DNA as dimer; homodimer and probable heterodimer with NR2F6. Interacts with GTF2B; this interaction is direct. Interacts with COPS2.

The protein localises to the nucleus. Coup (chicken ovalbumin upstream promoter) transcription factor binds to the ovalbumin promoter and, in conjunction with another protein (S300-II) stimulates initiation of transcription. Binds to both direct repeats and palindromes of the 5'-AGGTCA-3' motif. Represses transcriptional activity of LHCG. The polypeptide is COUP transcription factor 1 (NR2F1) (Homo sapiens (Human)).